The primary structure comprises 269 residues: Indole-3-glycerol phosphate synthase (269 aa).

It belongs to the TrpC family.

The enzyme catalyses 1-(2-carboxyphenylamino)-1-deoxy-D-ribulose 5-phosphate + H(+) = (1S,2R)-1-C-(indol-3-yl)glycerol 3-phosphate + CO2 + H2O. It functions in the pathway amino-acid biosynthesis; L-tryptophan biosynthesis; L-tryptophan from chorismate: step 4/5. This is Indole-3-glycerol phosphate synthase from Rhodococcus jostii (strain RHA1).